Reading from the N-terminus, the 632-residue chain is Mitoguardin 1 (632 aa).

Residues 70-90 traverse the membrane as a helical segment; it reads PVAKKLFVVTAVSAISVIFLA. Ser-289 and Ser-293 each carry phosphoserine.

The protein belongs to the mitoguardin family. Homodimer and heterodimer; forms heterodimers with MIGA2. Interacts with PLD6/MitoPLD.

It localises to the mitochondrion outer membrane. Its function is as follows. Regulator of mitochondrial fusion: acts by forming homo- and heterodimers at the mitochondrial outer membrane and facilitating the formation of PLD6/MitoPLD dimers. May act by regulating phospholipid metabolism via PLD6/MitoPLD. The protein is Mitoguardin 1 of Homo sapiens (Human).